Reading from the N-terminus, the 590-residue chain is ATP-dependent lipid A-core flippase (590 aa).

A run of 6 helical transmembrane segments spans residues 31-51 (IFIAAILAMAVVAASEGVIPK), 74-94 (AILTGVALIRGVAQFASGYLL), 132-152 (AVIFEVNQVLSILTSVFITLV), 159-179 (VALLIYLFYTNWRLTLIVSVI), 259-279 (VTAFLAALALSVIITIAMIQA), and 286-306 (IGGFTGFVMAMLLLISPLKHL). Residues 33-315 (IAAILAMAVV…LTDINQPLTR (283 aa)) form the ABC transmembrane type-1 domain. The ABC transporter domain occupies 347–585 (LVFERVGFRY…NGLYAGLHRI (239 aa)). ATP is bound at residue 381–388 (GPSGSGKT).

It belongs to the ABC transporter superfamily. Lipid exporter (TC 3.A.1.106) family. Homodimer.

The protein localises to the cell inner membrane. It catalyses the reaction ATP + H2O + lipid A-core oligosaccharideSide 1 = ADP + phosphate + lipid A-core oligosaccharideSide 2.. Functionally, involved in lipopolysaccharide (LPS) biosynthesis. Translocates lipid A-core from the inner to the outer leaflet of the inner membrane. Transmembrane domains (TMD) form a pore in the inner membrane and the ATP-binding domain (NBD) is responsible for energy generation. This is ATP-dependent lipid A-core flippase from Cupriavidus pinatubonensis (strain JMP 134 / LMG 1197) (Cupriavidus necator (strain JMP 134)).